The following is a 704-amino-acid chain: Elongation factor G 2 (704 aa).

A tr-type G domain is found at 8-290; sequence ERYRNIGISA…AIIDYLPSPV (283 aa). GTP-binding positions include 17-24, 88-92, and 142-145; these read AHIDAGKT, DTPGH, and NKMD.

It belongs to the TRAFAC class translation factor GTPase superfamily. Classic translation factor GTPase family. EF-G/EF-2 subfamily.

It localises to the cytoplasm. Its function is as follows. Catalyzes the GTP-dependent ribosomal translocation step during translation elongation. During this step, the ribosome changes from the pre-translocational (PRE) to the post-translocational (POST) state as the newly formed A-site-bound peptidyl-tRNA and P-site-bound deacylated tRNA move to the P and E sites, respectively. Catalyzes the coordinated movement of the two tRNA molecules, the mRNA and conformational changes in the ribosome. This Polaromonas sp. (strain JS666 / ATCC BAA-500) protein is Elongation factor G 2.